Reading from the N-terminus, the 762-residue chain is 5-methyltetrahydropteroyltriglutamate--homocysteine methyltransferase (762 aa).

5-methyltetrahydropteroyltri-L-glutamate-binding positions include 17–20 (REWK) and Lys-111. Residues 435–437 (IGS) and Glu-488 each bind L-homocysteine. L-methionine contacts are provided by residues 435 to 437 (IGS) and Glu-488. Residues 519–520 (RC) and Trp-565 contribute to the 5-methyltetrahydropteroyltri-L-glutamate site. Position 603 (Asp-603) interacts with L-homocysteine. Asp-603 serves as a coordination point for L-methionine. Position 609 (Glu-609) interacts with 5-methyltetrahydropteroyltri-L-glutamate. Zn(2+)-binding residues include His-645, Cys-647, and Glu-669. The active-site Proton donor is the His-698. Cys-730 is a Zn(2+) binding site.

It belongs to the vitamin-B12 independent methionine synthase family. Zn(2+) is required as a cofactor.

The catalysed reaction is 5-methyltetrahydropteroyltri-L-glutamate + L-homocysteine = tetrahydropteroyltri-L-glutamate + L-methionine. It functions in the pathway amino-acid biosynthesis; L-methionine biosynthesis via de novo pathway; L-methionine from L-homocysteine (MetE route): step 1/1. In terms of biological role, catalyzes the transfer of a methyl group from 5-methyltetrahydrofolate to homocysteine resulting in methionine formation. The protein is 5-methyltetrahydropteroyltriglutamate--homocysteine methyltransferase of Bacillus cereus (strain ZK / E33L).